The sequence spans 552 residues: Putative transport protein APJL_0985 (552 aa).

Transmembrane regions (helical) follow at residues 4-24 (IAIIVSLLSLVAVLGLWIGHI), 29-49 (VGLGIGGVLFGGIIISHCTHL), 65-85 (FGLILFVYSIGIQVGPGFFAS), 95-115 (GFAVMIVGLSGILVALIHKLF), and 161-181 (IAYPFGIIGILLSMWLIRIIF). 2 RCK C-terminal domains span residues 190–275 (QEFD…ILGE) and 277–360 (ADVS…IIGD). Transmembrane regions (helical) follow at residues 370-390 (MLPIFLGIGLGVLLGSLPLYL), 403-425 (GGPLVVALILARIGSIGKLYWFM), 438-458 (IVLFLSVVGLKAGANFLDTLL), 463-483 (LAWMGYGAIITFIPLIVTGFV), 492-512 (YLSLCGLLSGAMTDPPALAFA), and 529-549 (VYPLVMFLRIILPQLLAILLW).

This sequence belongs to the AAE transporter (TC 2.A.81) family. YidE subfamily.

The protein resides in the cell membrane. The sequence is that of Putative transport protein APJL_0985 from Actinobacillus pleuropneumoniae serotype 3 (strain JL03).